A 245-amino-acid polypeptide reads, in one-letter code: 7-cyano-7-deazaguanine synthase (245 aa).

Residue 19-29 (FSGGQDSATCL) coordinates ATP. Zn(2+) is bound by residues Cys-207, Cys-222, Cys-225, and Cys-228.

The protein belongs to the QueC family. It depends on Zn(2+) as a cofactor.

The enzyme catalyses 7-carboxy-7-deazaguanine + NH4(+) + ATP = 7-cyano-7-deazaguanine + ADP + phosphate + H2O + H(+). The protein operates within purine metabolism; 7-cyano-7-deazaguanine biosynthesis. Functionally, catalyzes the ATP-dependent conversion of 7-carboxy-7-deazaguanine (CDG) to 7-cyano-7-deazaguanine (preQ(0)). The sequence is that of 7-cyano-7-deazaguanine synthase from Gluconacetobacter diazotrophicus (strain ATCC 49037 / DSM 5601 / CCUG 37298 / CIP 103539 / LMG 7603 / PAl5).